A 140-amino-acid chain; its full sequence is Histone H2B (140 aa).

Positions 1–47 (MPPKAQKTPTTGGKAPAGKAPVEKKEAGKKTAAPSGEKKKRTKTRKE) are disordered. Lys7 carries the N6-acetyllysine; alternate modification. Lys7 is covalently cross-linked (Glycyl lysine isopeptide (Lys-Gly) (interchain with G-Cter in SUMO); alternate). Lys14 bears the N6-acetyllysine mark. Lys24 bears the N6-acetyllysine; alternate mark. Lys24 is covalently cross-linked (Glycyl lysine isopeptide (Lys-Gly) (interchain with G-Cter in SUMO); alternate). Lys25 is covalently cross-linked (Glycyl lysine isopeptide (Lys-Gly) (interchain with G-Cter in SUMO)). A Glycyl lysine isopeptide (Lys-Gly) (interchain with G-Cter in ubiquitin) cross-link involves residue Lys134.

This sequence belongs to the histone H2B family. As to quaternary structure, the nucleosome is a histone octamer containing two molecules each of H2A, H2B, H3 and H4 assembled in one H3-H4 heterotetramer and two H2A-H2B heterodimers. The octamer wraps approximately 147 bp of DNA. Monoubiquitinated by BRE1 to form H2BK123ub1. H2BK123ub1 gives a specific tag for epigenetic transcriptional activation and is also prerequisite for H3K4me and H3K79me formation. H2BK123ub1 also modulates the formation of double-strand breaks during meiosis and is a prerequisite for DNA-damage checkpoint activation. In terms of processing, acetylated by GCN5 to form H2BK11ac and H2BK16ac. H2BK16ac can also be formed by ESA1. Acetylation of N-terminal lysines and particularly formation of H2BK11acK16ac has a positive effect on transcription. Post-translationally, sumoylation to form H2BK6su and probably also H2BK16su or H2BK17su, occurs preferentially near the telomeres and represses gene transcription.

It localises to the nucleus. The protein resides in the chromosome. In terms of biological role, core component of nucleosome. Nucleosomes wrap and compact DNA into chromatin, limiting DNA accessibility to the cellular machineries which require DNA as a template. Histones thereby play a central role in transcription regulation, DNA repair, DNA replication and chromosomal stability. DNA accessibility is regulated via a complex set of post-translational modifications of histones, also called histone code, and nucleosome remodeling. This chain is Histone H2B (HTB1), found in Phaeosphaeria nodorum (strain SN15 / ATCC MYA-4574 / FGSC 10173) (Glume blotch fungus).